The sequence spans 891 residues: Valine--tRNA ligase (891 aa).

Positions 43–53 (PFTSGTLHLGH) match the 'HIGH' region motif. A 'KMSKS' region motif is present at residues 536 to 540 (KMSKS). K539 is a binding site for ATP.

This sequence belongs to the class-I aminoacyl-tRNA synthetase family. ValS type 2 subfamily.

The protein resides in the cytoplasm. The catalysed reaction is tRNA(Val) + L-valine + ATP = L-valyl-tRNA(Val) + AMP + diphosphate. Catalyzes the attachment of valine to tRNA(Val). As ValRS can inadvertently accommodate and process structurally similar amino acids such as threonine, to avoid such errors, it has a 'posttransfer' editing activity that hydrolyzes mischarged Thr-tRNA(Val) in a tRNA-dependent manner. This is Valine--tRNA ligase from Pyrococcus abyssi (strain GE5 / Orsay).